The sequence spans 192 residues: 3-isopropylmalate dehydratase small subunit (192 aa).

It belongs to the LeuD family. LeuD type 1 subfamily. In terms of assembly, heterodimer of LeuC and LeuD.

The enzyme catalyses (2R,3S)-3-isopropylmalate = (2S)-2-isopropylmalate. It functions in the pathway amino-acid biosynthesis; L-leucine biosynthesis; L-leucine from 3-methyl-2-oxobutanoate: step 2/4. Functionally, catalyzes the isomerization between 2-isopropylmalate and 3-isopropylmalate, via the formation of 2-isopropylmaleate. This chain is 3-isopropylmalate dehydratase small subunit, found in Oceanobacillus iheyensis (strain DSM 14371 / CIP 107618 / JCM 11309 / KCTC 3954 / HTE831).